The following is a 146-amino-acid chain: Regulator of ribonuclease activity B (146 aa).

The tract at residues 110–146 (WGTYFEDPDGEEEEGDEFDQDDEDGPADRDEVPATRH) is disordered. Positions 115-134 (EDPDGEEEEGDEFDQDDEDG) are enriched in acidic residues. Residues 135–146 (PADRDEVPATRH) show a composition bias toward basic and acidic residues.

The protein belongs to the RraB family. In terms of assembly, interacts with the C-terminal region of Rne.

It localises to the cytoplasm. Globally modulates RNA abundance by binding to RNase E (Rne) and regulating its endonucleolytic activity. Can modulate Rne action in a substrate-dependent manner by altering the composition of the degradosome. The sequence is that of Regulator of ribonuclease activity B from Sodalis glossinidius (strain morsitans).